The primary structure comprises 334 residues: Cytosolic Fe-S cluster assembly factor NBP35 (334 aa).

The [4Fe-4S] cluster site is built by Cys33, Cys47, Cys50, and Cys56. ATP is bound at residue 86–93 (GKGGVGKS). Residues Cys259 and Cys262 each coordinate [4Fe-4S] cluster.

This sequence belongs to the Mrp/NBP35 ATP-binding proteins family. NUBP1/NBP35 subfamily. In terms of assembly, heterotetramer of 2 NBP35 and 2 CFD1 chains. The cofactor is [4Fe-4S] cluster.

It localises to the cytoplasm. The protein resides in the nucleus. Component of the cytosolic iron-sulfur (Fe/S) protein assembly (CIA) machinery. Required for maturation of extramitochondrial Fe-S proteins. The NBP35-CFD1 heterotetramer forms a Fe-S scaffold complex, mediating the de novo assembly of an Fe-S cluster and its transfer to target apoproteins. Required for biogenesis and export of both ribosomal subunits, which may reflect a role in assembly of the Fe/S clusters in RLI1, a protein which performs rRNA processing and ribosome export. This chain is Cytosolic Fe-S cluster assembly factor NBP35, found in Candida glabrata (strain ATCC 2001 / BCRC 20586 / JCM 3761 / NBRC 0622 / NRRL Y-65 / CBS 138) (Yeast).